Here is a 180-residue protein sequence, read N- to C-terminus: Adenine phosphoribosyltransferase (180 aa).

An N-acetylalanine modification is found at Ala-2. Ser-4, Ser-15, and Ser-30 each carry phosphoserine. Residue Tyr-60 is modified to Phosphotyrosine. Position 66 is a phosphoserine (Ser-66). Lys-114 carries the post-translational modification N6-acetyllysine. Thr-135 is subject to Phosphothreonine.

Belongs to the purine/pyrimidine phosphoribosyltransferase family. Homodimer.

It is found in the cytoplasm. It carries out the reaction AMP + diphosphate = 5-phospho-alpha-D-ribose 1-diphosphate + adenine. It functions in the pathway purine metabolism; AMP biosynthesis via salvage pathway; AMP from adenine: step 1/1. Catalyzes a salvage reaction resulting in the formation of AMP, that is energically less costly than de novo synthesis. The polypeptide is Adenine phosphoribosyltransferase (Homo sapiens (Human)).